The primary structure comprises 410 residues: 3-phosphoshikimate 1-carboxyvinyltransferase (410 aa).

3-phosphoshikimate contacts are provided by K27, S28, and R32. Phosphoenolpyruvate is bound at residue K27. Residues G91 and R119 each coordinate phosphoenolpyruvate. 3-phosphoshikimate is bound by residues S161, S162, Q163, D297, Q319, and K323. Q163 lines the phosphoenolpyruvate pocket. The active-site Proton acceptor is D297. Phosphoenolpyruvate is bound by residues R327, R368, and K394.

It belongs to the EPSP synthase family. As to quaternary structure, monomer.

Its subcellular location is the cytoplasm. It catalyses the reaction 3-phosphoshikimate + phosphoenolpyruvate = 5-O-(1-carboxyvinyl)-3-phosphoshikimate + phosphate. It functions in the pathway metabolic intermediate biosynthesis; chorismate biosynthesis. Functionally, catalyzes the transfer of the enolpyruvyl moiety of phosphoenolpyruvate (PEP) to the 5-hydroxyl of shikimate-3-phosphate (S3P) to produce enolpyruvyl shikimate-3-phosphate and inorganic phosphate. The chain is 3-phosphoshikimate 1-carboxyvinyltransferase from Pyrococcus abyssi (strain GE5 / Orsay).